A 332-amino-acid polypeptide reads, in one-letter code: DNA-directed RNA polymerase subunit alpha (332 aa).

The alpha N-terminal domain (alpha-NTD) stretch occupies residues 2–234; sequence TVTANQVLRP…DQLSVFGDFT (233 aa). An alpha C-terminal domain (alpha-CTD) region spans residues 248 to 332; sequence VDPVLLRPID…AGVAQHGMLG (85 aa).

It belongs to the RNA polymerase alpha chain family. In terms of assembly, homodimer. The RNAP catalytic core consists of 2 alpha, 1 beta, 1 beta' and 1 omega subunit. When a sigma factor is associated with the core the holoenzyme is formed, which can initiate transcription.

The enzyme catalyses RNA(n) + a ribonucleoside 5'-triphosphate = RNA(n+1) + diphosphate. Its function is as follows. DNA-dependent RNA polymerase catalyzes the transcription of DNA into RNA using the four ribonucleoside triphosphates as substrates. The chain is DNA-directed RNA polymerase subunit alpha from Xanthomonas axonopodis pv. citri (strain 306).